Reading from the N-terminus, the 397-residue chain is Lysophospholipid transporter LplT (397 aa).

Topologically, residues 1 to 17 (MSESVHTNTSLWSKGMK) are periplasmic. The chain crosses the membrane as a helical span at residues 18 to 38 (AVIVAQFLSAFGDNALLFATL). Residues 39–52 (ALLKAQFYPEWSQP) are Cytoplasmic-facing. A helical transmembrane segment spans residues 53–73 (ILQMVFVGAYILFAPFVGQVA). The Periplasmic segment spans residues 74 to 90 (DSFAKGRVMMFANGLKL). The chain crosses the membrane as a helical span at residues 91–111 (LGAASICFGINPFLGYTLVGV). The Cytoplasmic segment spans residues 112–144 (GAAAYSPAKYGILGELTTGSKLVKANGLMEAST). A helical transmembrane segment spans residues 145–165 (IAAILLGSVAGGVLADWHVLV). Ala166 is a topological domain (periplasmic). The helical transmembrane segment at 167 to 187 (LAACALAYGGAVVANIYIPKL) threads the bilayer. The Cytoplasmic segment spans residues 188–226 (AAARPGQSWNLINMTRSFLNACTSLWRNGETRFSLVGTS). The chain crosses the membrane as a helical span at residues 227-247 (LFWGAGVTLRFLLVLWVPVAL). Residues 248-256 (GITDNSTPT) lie on the Periplasmic side of the membrane. A helical transmembrane segment spans residues 257 to 277 (YLNAMVAIGIVVGAGAAAKLV). Topologically, residues 278 to 280 (TLE) are cytoplasmic. A helical membrane pass occupies residues 281–301 (TVSRCMPAGILIGVVVLIFSL). The Periplasmic segment spans residues 302–304 (QHE). A helical membrane pass occupies residues 305 to 325 (LLPAYALLMLIGVMGGFFVVP). Residues 326-343 (LNALLQERGKKSVGAGNA) lie on the Cytoplasmic side of the membrane. A helical transmembrane segment spans residues 344 to 364 (IAVQNLGENSAMLLMLGIYSL). Topologically, residues 365-366 (AV) are periplasmic. The chain crosses the membrane as a helical span at residues 367–387 (MVGIPVVPIGIGFGALFALAI). Over 388–397 (TALWIWQRRH) the chain is Cytoplasmic.

This sequence belongs to the major facilitator superfamily. LplT (TC 2.A.1.42) family.

The protein resides in the cell inner membrane. Its function is as follows. Catalyzes the facilitated diffusion of 2-acyl-glycero-3-phosphoethanolamine (2-acyl-GPE) into the cell. This is Lysophospholipid transporter LplT from Shigella boydii serotype 4 (strain Sb227).